The chain runs to 262 residues: uncharacterized protein (262 aa).

7 helical membrane passes run 46-66 (GAVGWQLAGLTALLSAFCYAA), 77-97 (CLTESSPSLVFVIPVTSVIFI), 108-128 (IGVLLFYTLLHVPPLIVICLC), 133-153 (LVISAALFTLLAFLSCTGVAL), 163-183 (QIVVVHALITLTFTAIVVVIL), 186-206 (GWSWCFKIVLSFSVLITCLAV), and 226-246 (LLAAVKVFLSLVFTLLMVLRI).

This sequence belongs to the cytomegalovirus US12 family.

The protein localises to the membrane. This is an uncharacterized protein from Homo sapiens (Human).